The primary structure comprises 569 residues: 3-(3-hydroxy-phenyl)propionate/3-hydroxycinnamic acid hydroxylase (569 aa).

Residues 8 to 37 (DVVI…VVDE) and 273 to 283 (FREGRLMLAGD) contribute to the FAD site.

This sequence belongs to the PheA/TfdB FAD monooxygenase family. FAD is required as a cofactor.

The enzyme catalyses 3-(3-hydroxyphenyl)propanoate + NADH + O2 + H(+) = 3-(2,3-dihydroxyphenyl)propanoate + NAD(+) + H2O. It catalyses the reaction (2E)-3-(3-hydroxyphenyl)prop-2-enoate + NADH + O2 + H(+) = (2E)-3-(2,3-dihydroxyphenyl)prop-2-enoate + NAD(+) + H2O. The protein operates within aromatic compound metabolism; 3-phenylpropanoate degradation. Its function is as follows. Catalyzes the insertion of one atom of molecular oxygen into position 2 of the phenyl ring of 3-(3-hydroxyphenyl)propionate (3-HPP) and hydroxycinnamic acid (3HCI). In Mycolicibacterium gilvum (strain PYR-GCK) (Mycobacterium gilvum (strain PYR-GCK)), this protein is 3-(3-hydroxy-phenyl)propionate/3-hydroxycinnamic acid hydroxylase.